We begin with the raw amino-acid sequence, 489 residues long: MERKFNDQELIRREKLKNLQEANQDPYEIEKVSRTMTIGDFNSKFAKLKTHNTNNNIKLAGRVVALRQTFGVIRDFYGDTQFYLNKKKVSKSMLEYFNKVLDLGDIVEIFGSPFRTQKGELTLDVKKIKIVSKALKPLPEKWHGLEDEELRARHRYVDLIVNKDSMKVFVDRIRILKIIRQFMDSQNYLEVETPVLHPILGGANARPFITFHNTLERNFYLRIATELPLKKLIVGGFDKVYEIGRIFRNEGMDSTHNPEFTSMEVYAAYENMEYMMRLTENLFKYVAKSLKKPVVKMGENEIYLTQKFRRIHMVDFIKQETGVDFWEVKSNQEAQELAKKHNVKFEKHQSTLGHIINLFFEEFCEAKCIQPTFVYGHPIDVSPLSKKDYKNPGFTKRFELFINTKEYANAFAELNDPIDQYERFEAQVKEKSLGNDEAVEMDMDFIEALEYGLPPTAGLGVGIDRMIMLFTEKSSIRDVLLFPHMKDKK.

Mg(2+)-binding residues include glutamate 399 and glutamate 406.

This sequence belongs to the class-II aminoacyl-tRNA synthetase family. As to quaternary structure, homodimer. Mg(2+) is required as a cofactor.

It localises to the cytoplasm. It carries out the reaction tRNA(Lys) + L-lysine + ATP = L-lysyl-tRNA(Lys) + AMP + diphosphate. The protein is Lysine--tRNA ligase of Malacoplasma penetrans (strain HF-2) (Mycoplasma penetrans).